A 478-amino-acid polypeptide reads, in one-letter code: MAEKTSDDIFKLIKDENVEYVDIRFCDLPGVVQHFSIPASAFDESVFEDGLAFDGSSVRGFQSIHESDMMLLPDPNTARIDPFRAAKTLNMNFFVHDPFTREAYSRDPRNVARKAENYLASTGIADTAFFGAEAEFYIFDSVSFDSKINGTFYEVDSESGWWNTGEPFESDGSANRGYKVRPKGGYFPVAPYDHYVDLRDQMATNLQNAGFTLERGHHEVGTAGQAEINYKFNTLLAAADDVLLFKYIIKNTAWQAGKTVTFMPKPLFGDNGSGMHAHQSLWKDGQPLFHDESGYAGLSDIARHYIGGILHHAPSLLAFTNPTVNSYKRLVPGYEAPINLVYSQRNRSACVRIPITGNNPKAKRLEFRCPDSSGNPYLAFAAMLMAGIDGIKKKIEPLQPVDKDLYELPPDEAAAIPQAPTSLSAVIDKLEEDHEYLTEGGVFTEDLIETWISYKRENEIMPIQIRPHPYEFSLYYDV.

An Isoglutamyl lysine isopeptide (Lys-Gln) (interchain with Q-Cter in protein Pup) cross-link involves residue K14. The region spanning 16–100 (ENVEYVDIRF…MNFFVHDPFT (85 aa)) is the GS beta-grasp domain. The region spanning 108-478 (PRNVARKAEN…PYEFSLYYDV (371 aa)) is the GS catalytic domain. Residues E133 and E135 each coordinate Mg(2+). Residue E214 participates in ATP binding. 2 residues coordinate Mg(2+): E219 and E227. Residue 230 to 232 (YKF) participates in ATP binding. Residues 271-272 (NG) and G272 each bind L-glutamate. H276 is a Mg(2+) binding site. ATP-binding positions include 278-280 (HQS) and S280. Residues R329, E335, and R347 each coordinate L-glutamate. 3 residues coordinate ATP: R347, R352, and K361. E366 provides a ligand contact to Mg(2+). L-glutamate is bound at residue R368. Position 406 is an O-AMP-tyrosine (Y406).

The protein belongs to the glutamine synthetase family. As to quaternary structure, oligomer of 12 subunits arranged in the form of two hexagons. Mg(2+) is required as a cofactor.

The protein localises to the cytoplasm. It catalyses the reaction L-glutamate + NH4(+) + ATP = L-glutamine + ADP + phosphate + H(+). Its activity is regulated as follows. When cellular nitrogen levels are high, the C-terminal adenylyl transferase (AT) of GlnE inhibits GlnA by covalent transfer of an adenylyl group from ATP to Tyr-406. Conversely, when nitrogen levels are low, the N-terminal adenylyl removase (AR) of GlnE activates GlnA by removing the adenylyl group by phosphorolysis. The fully adenylated enzyme complex is inactive. In terms of biological role, involved in nitrogen metabolism via ammonium assimilation. Catalyzes the ATP-dependent biosynthesis of glutamine from glutamate and ammonia. The polypeptide is Glutamine synthetase (Mycolicibacterium smegmatis (strain ATCC 700084 / mc(2)155) (Mycobacterium smegmatis)).